Reading from the N-terminus, the 221-residue chain is MDVKMHSSWKPILNEEFQKPYFSELISFVKSEYTTKVCYPKGNQIFSAFDHCHFDEVKVVIIGQDPYHGPNQANGLCFSVNDGIPFPPSLHNIFKEIETDLGKPMPSTGNLERWADQGVFLLNATLTVRQSEAGSHQGKGWEKFTDAVIKQISAEKENVVFLLWGGFAQKKAALIDSSKHHILKSGHPSPLSANRGFWFGNKHFSQTNDFLKSKGLKQIEW.

Catalysis depends on Asp65, which acts as the Proton acceptor.

This sequence belongs to the uracil-DNA glycosylase (UDG) superfamily. UNG family.

It is found in the cytoplasm. It catalyses the reaction Hydrolyzes single-stranded DNA or mismatched double-stranded DNA and polynucleotides, releasing free uracil.. Its function is as follows. Excises uracil residues from the DNA which can arise as a result of misincorporation of dUMP residues by DNA polymerase or due to deamination of cytosine. The chain is Uracil-DNA glycosylase from Flavobacterium johnsoniae (strain ATCC 17061 / DSM 2064 / JCM 8514 / BCRC 14874 / CCUG 350202 / NBRC 14942 / NCIMB 11054 / UW101) (Cytophaga johnsonae).